The following is a 146-amino-acid chain: Putative serine protease inhibitor SAV_2156 (146 aa).

The signal sequence occupies residues Met1–Ala26. Cystine bridges form between Cys57–Cys70 and Cys90–Cys120.

It belongs to the protease inhibitor I16 (SSI) family.

It localises to the secreted. This is Putative serine protease inhibitor SAV_2156 from Streptomyces avermitilis (strain ATCC 31267 / DSM 46492 / JCM 5070 / NBRC 14893 / NCIMB 12804 / NRRL 8165 / MA-4680).